The sequence spans 343 residues: NAD-dependent deacetylase sir2E (343 aa).

A Deacetylase sirtuin-type domain is found at 27–300; it reads YLKNKKEFEF…PLLERQLLYE (274 aa). The active-site Proton acceptor is histidine 152. Zn(2+) contacts are provided by cysteine 160, cysteine 165, cysteine 200, and cysteine 203.

Belongs to the sirtuin family.

Its subcellular location is the nucleus. The catalysed reaction is N(6)-acetyl-L-lysyl-[protein] + NAD(+) + H2O = 2''-O-acetyl-ADP-D-ribose + nicotinamide + L-lysyl-[protein]. NAD-dependent deacetylase, which plays an important role in the regulation of transcriptional repression. May play a role in cell cycle. When overexpressed, the cell cycle is accelerated. This Dictyostelium discoideum (Social amoeba) protein is NAD-dependent deacetylase sir2E (sir2E).